Reading from the N-terminus, the 85-residue chain is Cytochrome c2 (85 aa).

Residues C12, C15, H16, and M61 each coordinate heme c.

The protein belongs to the cytochrome c family. Post-translationally, binds 1 heme c group covalently per subunit.

In terms of biological role, cytochrome c2 is found mainly in purple, non-sulfur, photosynthetic bacteria where it functions as the electron donor to the oxidized bacteriochlorophyll in the photophosphorylation pathway. However, it may also have a role in the respiratory chain and is found in some non-photosynthetic bacteria. This Rubrivivax gelatinosus (Rhodocyclus gelatinosus) protein is Cytochrome c2.